An 84-amino-acid chain; its full sequence is Tenecin-1 (84 aa).

Positions 1–19 (MKLTIFALVACFFILQIAA) are cleaved as a signal peptide. The propeptide occupies 20–41 (FPLEEAATAEEIEQGEHIRVKR). Cystine bridges form between Cys-44–Cys-75, Cys-61–Cys-81, and Cys-65–Cys-83.

This sequence belongs to the invertebrate defensin family. Type 1 subfamily.

The protein localises to the secreted. In terms of biological role, bactericidal protein produced in response to injury. It is cytotoxic to Gram-positive bacteria. This Tenebrio molitor (Yellow mealworm beetle) protein is Tenecin-1.